Here is a 372-residue protein sequence, read N- to C-terminus: Hydrogenase-1 small chain (372 aa).

The tat-type signal signal peptide spans 1–45 (MNNEETFYQAMRRQGVTRRSFLKYCSLAATSLGLGAGMAPKIAWA). The Periplasmic portion of the chain corresponds to 46–325 (LENKPRIPVV…PQMGTHSTAD (280 aa)). [4Fe-4S] cluster-binding residues include C62, C65, C160, C194, H232, C235, C260, and C266. Residues C275, C294, and C297 each coordinate [3Fe-4S] cluster. The helical transmembrane segment at 326–346 (TVGLTALGVVAAAVGVHAVAS) threads the bilayer. The tract at residues 346 to 372 (SSVDQRRRHNQQPTETEHQPGNEDKQA) is disordered. At 347–372 (SVDQRRRHNQQPTETEHQPGNEDKQA) the chain is on the cytoplasmic side. Positions 360-372 (ETEHQPGNEDKQA) are enriched in basic and acidic residues.

It belongs to the [NiFe]/[NiFeSe] hydrogenase small subunit family. As to quaternary structure, heterodimer of a large and a small subunit. The cofactor is [4Fe-4S] cluster. [3Fe-4S] cluster serves as cofactor. Post-translationally, predicted to be exported by the Tat system. The position of the signal peptide cleavage has not been experimentally proven.

It localises to the cell inner membrane. The catalysed reaction is H2 + A = AH2. This is one of three S.flexneri hydrogenases synthesized in response to different physiological conditions. HYD1 is believed to have a role in hydrogen cycling during fermentative growth. The sequence is that of Hydrogenase-1 small chain (hyaA) from Shigella flexneri.